The primary structure comprises 698 residues: Protein arginine N-methyltransferase 7 (698 aa).

SAM-dependent MTase PRMT-type domains follow at residues 14 to 357 (QNTW…YSLW) and 366 to 698 (EKPA…EKSE).

The protein belongs to the class I-like SAM-binding methyltransferase superfamily. Protein arginine N-methyltransferase family. PRMT7 subfamily.

In terms of biological role, essential arginine methyltransferase that can both catalyze the formation of omega-N monomethylarginine (MMA) and symmetrical dimethylarginine (sDMA). Specifically mediates the symmetrical dimethylation of arginine residues in the small nuclear ribonucleoproteins SmD1 and SmD3. The sequence is that of Protein arginine N-methyltransferase 7 (Art7) from Drosophila mojavensis (Fruit fly).